A 261-amino-acid polypeptide reads, in one-letter code: Putative ketoacyl reductase (261 aa).

Residues threonine 15, serine 16, isoleucine 18, arginine 38, glycine 39, aspartate 63, valine 64, asparagine 90, tyrosine 157, lysine 161, valine 190, and threonine 192 each contribute to the NADP(+) site. Residue tyrosine 157 is the Proton acceptor of the active site.

Belongs to the short-chain dehydrogenases/reductases (SDR) family. As to quaternary structure, homotetramer.

It functions in the pathway antibiotic biosynthesis; actinorhodin biosynthesis. This is Putative ketoacyl reductase (actIII) from Streptomyces coelicolor (strain ATCC BAA-471 / A3(2) / M145).